The following is an 85-amino-acid chain: Large ribosomal subunit protein bL27 (85 aa).

The disordered stretch occupies residues 1–21; it reads MAHKKAGGSTRNGRDSESKRL.

Belongs to the bacterial ribosomal protein bL27 family.

The chain is Large ribosomal subunit protein bL27 from Ectopseudomonas mendocina (strain ymp) (Pseudomonas mendocina).